Here is a 311-residue protein sequence, read N- to C-terminus: MVNPLYQKHIISINDLSREDLELALNVAASLKAKPQPELLKHKVIASCFFEASTRTRLSFETAMHRLGASVVGFADSNNTSLGKKGETLADTISVISQYVDAIVMRHPQEGASRLATEFSGGIPVLNAGDGANQHPTQTLLDLFTIQETQGRLNNINIAMVGDLKYGRTVHSLTQALAKFEGNRFYFIAPDALAMPDYILSMLKEKNIAYSLHNSIDEVVGELDILYMTRVQKERLDPSEYINIKSQFVLRAADLDNARPNLKVLHPLPRVDEITIDVDTTPYAYYFQQAGNGIYARQALLALVLNRELVL.

Carbamoyl phosphate is bound by residues arginine 55 and threonine 56. Lysine 85 contacts L-aspartate. Carbamoyl phosphate contacts are provided by arginine 106, histidine 135, and glutamine 138. Residues arginine 168 and arginine 230 each contribute to the L-aspartate site. Positions 268 and 269 each coordinate carbamoyl phosphate.

It belongs to the aspartate/ornithine carbamoyltransferase superfamily. ATCase family. As to quaternary structure, heterododecamer (2C3:3R2) of six catalytic PyrB chains organized as two trimers (C3), and six regulatory PyrI chains organized as three dimers (R2).

It carries out the reaction carbamoyl phosphate + L-aspartate = N-carbamoyl-L-aspartate + phosphate + H(+). It participates in pyrimidine metabolism; UMP biosynthesis via de novo pathway; (S)-dihydroorotate from bicarbonate: step 2/3. Functionally, catalyzes the condensation of carbamoyl phosphate and aspartate to form carbamoyl aspartate and inorganic phosphate, the committed step in the de novo pyrimidine nucleotide biosynthesis pathway. This is Aspartate carbamoyltransferase catalytic subunit from Pectobacterium atrosepticum (strain SCRI 1043 / ATCC BAA-672) (Erwinia carotovora subsp. atroseptica).